A 277-amino-acid polypeptide reads, in one-letter code: Probable ABC transporter permease protein y4oR (277 aa).

The next 7 membrane-spanning stretches (helical) occupy residues 15-35 (LWTL…TWMV), 79-99 (VVTI…AYAL), 109-129 (LLVA…VPVY), 140-160 (TYQA…IWLM), 189-209 (IMMP…FIAV), 213-233 (FLFA…AMLG), and 242-262 (WDAV…FAFI). The ABC transmembrane type-1 domain occupies 74 to 263 (IINSAVVTIV…TPVIAFAFIM (190 aa)).

This sequence belongs to the binding-protein-dependent transport system permease family. MalFG subfamily.

Its subcellular location is the cell inner membrane. Probably part of the binding-protein-dependent transport system y4oPQRS. This system probably transports a sugar-like molecule. Probably responsible for the translocation of the substrate across the membrane. This chain is Probable ABC transporter permease protein y4oR, found in Sinorhizobium fredii (strain NBRC 101917 / NGR234).